The primary structure comprises 138 residues: uncharacterized protein (138 aa).

At Ser-110 the chain carries Phosphoserine.

It localises to the cytoplasm. Its subcellular location is the nucleus. This is an uncharacterized protein from Schizosaccharomyces pombe (strain 972 / ATCC 24843) (Fission yeast).